Consider the following 116-residue polypeptide: Vesicle-associated membrane protein 2 (116 aa).

The tract at residues 1–33 is disordered; it reads MSATAATAPPAAPAGEGGPPAPPPNLTSNRRLQ. The residue at position 2 (Ser2) is an N-acetylserine. The Cytoplasmic portion of the chain corresponds to 2–94; sequence SATAATAPPA…KRKYWWKNLK (93 aa). Positions 31–91 constitute a v-SNARE coiled-coil homology domain; that stretch reads RLQQTQAQVD…AKLKRKYWWK (61 aa). Positions 92–116 are required for interaction with SEPT8; that stretch reads NLKMMIILGVICAIILIIIIVYFST. Residues 95-114 form a helical; Anchor for type IV membrane protein membrane-spanning segment; it reads MMIILGVICAIILIIIIVYF. Residues 115-116 are Vesicular-facing; that stretch reads ST.

The protein belongs to the synaptobrevin family. As to quaternary structure, part of the SNARE core complex containing SNAP25, VAMP2 and STX1A; this complex constitutes the basic catalytic machinery of the complex neurotransmitter release apparatus. Recruited to the SNARE complex following binding of the SNARE complex component STX1A to STXBP1. This complex binds to CPLX1. Interacts with POPDC1 and STX4. Interacts with VAPA and VAPB. Interacts with WDFY2, PRKCZ and PRKCI. Forms a complex with WDFY2 and PRKCZ. Interacts (via N-terminus) with KCNB1 (via N-terminus and C-terminus); stimulates the channel inactivation rate of KCNB1. Interacts with SEPT8; the interaction inhibits interaction of VAMP2 with SYP. Interacts with SYP; the interaction is inhibited by interaction with SEPT8. Interacts with PICALM. Interacts with alpha-synuclein/SNCA. Interacts with STX3. Post-translationally, phosphorylated by PRKCZ in vitro and this phosphorylation is increased in the presence of WDFY2. In terms of processing, (Microbial infection) Targeted and hydrolyzed by C.botulinum neurotoxin type B (BoNT/B, botB) which hydrolyzes the 76-Gln-|-Phe-77 bond and probably inhibits neurotransmitter release. (Microbial infection) Targeted and hydrolyzed by C.botulinum neurotoxin type D (BoNT/D, botD) which probably hydrolyzes the 59-Lys-|-Leu-60 bond and inhibits neurotransmitter release. Note that humans are not known to be infected by C.botulinum type D. Post-translationally, (Microbial infection) Targeted and hydrolyzed by C.botulinum neurotoxin type F (BoNT/F, botF) which hydrolyzes the 58-Gln-|-Lys-59 bond and probably inhibits neurotransmitter release. In terms of processing, (Microbial infection) Targeted and hydrolyzed by C.tetani tetanus toxin (tetX) which hydrolyzes the 76-Gln-|-Phe-77 bond and probably inhibits neurotransmitter release. Nervous system and skeletal muscle.

It localises to the cytoplasmic vesicle. The protein localises to the secretory vesicle. It is found in the synaptic vesicle membrane. Its subcellular location is the cell membrane. In terms of biological role, involved in the targeting and/or fusion of transport vesicles to their target membrane. Major SNARE protein of synaptic vesicles which mediates fusion of synaptic vesicles to release neurotransmitters. Essential for fast vesicular exocytosis and activity-dependent neurotransmitter release as well as fast endocytosis that mediates rapid reuse of synaptic vesicles. Modulates the gating characteristics of the delayed rectifier voltage-dependent potassium channel KCNB1. This Homo sapiens (Human) protein is Vesicle-associated membrane protein 2.